The primary structure comprises 365 residues: MLSNGISEDDLFSFLSLHKKEDLDHRYILSSMCTLPHPVAVRAHCMFMETNLGDPGLFPGTAALERLLVERLGTLFHHKNAGGYATSGGTESNIQALRLAKALRPGSSPNVVLPESVHFSFKKACDLLSLEMRSVPLGTDRRIMADKAAELIDKNTICLVGVAGTTEYGMVDPIADLAKIAAQQDIFLHVDAAFGGMVIPFLPKPVPFDFALPGVTTLAVDPHKMGMSTIPAGVLLTREPDMLDALNIDTPYLTVKKGYTLGGTRPGAPMAGALAVLDYLGISGMKAVVAGCMKNTERLIAGMETRGIQPAASPDVNVATFVCDRVPEPWKVSWTRAGHLRIVCMPHVTADRIEAFLSDFGDMYA.

K224 carries the N6-(pyridoxal phosphate)lysine modification.

Belongs to the group II decarboxylase family. MfnA subfamily. Pyridoxal 5'-phosphate serves as cofactor.

It carries out the reaction L-tyrosine + H(+) = tyramine + CO2. The catalysed reaction is L-aspartate + H(+) = beta-alanine + CO2. It functions in the pathway cofactor biosynthesis; methanofuran biosynthesis. The protein operates within cofactor biosynthesis; coenzyme A biosynthesis. Its function is as follows. Catalyzes the decarboxylation of L-tyrosine to produce tyramine for methanofuran biosynthesis. Can also catalyze the decarboxylation of L-aspartate to produce beta-alanine for coenzyme A (CoA) biosynthesis. The chain is Probable L-tyrosine/L-aspartate decarboxylase from Methanoregula boonei (strain DSM 21154 / JCM 14090 / 6A8).